The chain runs to 209 residues: U1 small nuclear ribonucleoprotein C (209 aa).

The Matrin-type zinc-finger motif lies at 4–36; it reads HYCDYCDVFLTHDSASVRKAHNSGRNHLANVRD. A compositionally biased stretch (low complexity) spans 72 to 87; that stretch reads PQHLQAPPQGGFAPPM. Residues 72-209 form a disordered region; the sequence is PQHLQAPPQG…RARMMGPGGR (138 aa). Pro residues-rich tracts occupy residues 93-150 and 159-191; these read GGFP…PFPP and PGAP…PTNP.

The protein belongs to the U1 small nuclear ribonucleoprotein C family. In terms of assembly, U1 snRNP is composed of the 7 core Sm proteins B/B', D1, D2, D3, E, F and G that assemble in a heptameric protein ring on the Sm site of the small nuclear RNA to form the core snRNP, and at least 3 U1 snRNP-specific proteins U1-70K, U1-A and U1-C. U1-C interacts with U1 snRNA and the 5' splice-site region of the pre-mRNA.

Its subcellular location is the nucleus. Functionally, component of the spliceosomal U1 snRNP, which is essential for recognition of the pre-mRNA 5' splice-site and the subsequent assembly of the spliceosome. U1-C is directly involved in initial 5' splice-site recognition for both constitutive and regulated alternative splicing. The interaction with the 5' splice-site seems to precede base-pairing between the pre-mRNA and the U1 snRNA. Stimulates commitment or early (E) complex formation by stabilizing the base pairing of the 5' end of the U1 snRNA and the 5' splice-site region. The protein is U1 small nuclear ribonucleoprotein C of Coprinopsis cinerea (strain Okayama-7 / 130 / ATCC MYA-4618 / FGSC 9003) (Inky cap fungus).